A 95-amino-acid polypeptide reads, in one-letter code: Aspartyl/glutamyl-tRNA(Asn/Gln) amidotransferase subunit C (95 aa).

The protein belongs to the GatC family. Heterotrimer of A, B and C subunits.

The catalysed reaction is L-glutamyl-tRNA(Gln) + L-glutamine + ATP + H2O = L-glutaminyl-tRNA(Gln) + L-glutamate + ADP + phosphate + H(+). It catalyses the reaction L-aspartyl-tRNA(Asn) + L-glutamine + ATP + H2O = L-asparaginyl-tRNA(Asn) + L-glutamate + ADP + phosphate + 2 H(+). Functionally, allows the formation of correctly charged Asn-tRNA(Asn) or Gln-tRNA(Gln) through the transamidation of misacylated Asp-tRNA(Asn) or Glu-tRNA(Gln) in organisms which lack either or both of asparaginyl-tRNA or glutaminyl-tRNA synthetases. The reaction takes place in the presence of glutamine and ATP through an activated phospho-Asp-tRNA(Asn) or phospho-Glu-tRNA(Gln). This Citrifermentans bemidjiense (strain ATCC BAA-1014 / DSM 16622 / JCM 12645 / Bem) (Geobacter bemidjiensis) protein is Aspartyl/glutamyl-tRNA(Asn/Gln) amidotransferase subunit C.